The following is a 658-amino-acid chain: Threonine--tRNA ligase (658 aa).

The TGS domain maps to 1 to 61; that stretch reads MSDVRVIIQR…RDGESVEPVE (61 aa). Residues 259–554 form a catalytic region; sequence DHRKLGNELD…LLEHYAGAFP (296 aa). Cys-353, His-404, and His-531 together coordinate Zn(2+).

This sequence belongs to the class-II aminoacyl-tRNA synthetase family. In terms of assembly, homodimer. Requires Zn(2+) as cofactor.

It is found in the cytoplasm. The enzyme catalyses tRNA(Thr) + L-threonine + ATP = L-threonyl-tRNA(Thr) + AMP + diphosphate + H(+). Functionally, catalyzes the attachment of threonine to tRNA(Thr) in a two-step reaction: L-threonine is first activated by ATP to form Thr-AMP and then transferred to the acceptor end of tRNA(Thr). Also edits incorrectly charged L-seryl-tRNA(Thr). This chain is Threonine--tRNA ligase, found in Streptomyces griseus subsp. griseus (strain JCM 4626 / CBS 651.72 / NBRC 13350 / KCC S-0626 / ISP 5235).